We begin with the raw amino-acid sequence, 365 residues long: Succinyl-diaminopimelate desuccinylase (365 aa).

A Zn(2+)-binding site is contributed by histidine 65. Aspartate 67 is an active-site residue. Aspartate 96 contacts Zn(2+). Glutamate 126 acts as the Proton acceptor in catalysis. Residues glutamate 127, glutamate 155, and histidine 340 each contribute to the Zn(2+) site.

The protein belongs to the peptidase M20A family. DapE subfamily. In terms of assembly, homodimer. Zn(2+) serves as cofactor. It depends on Co(2+) as a cofactor.

It carries out the reaction N-succinyl-(2S,6S)-2,6-diaminopimelate + H2O = (2S,6S)-2,6-diaminopimelate + succinate. It participates in amino-acid biosynthesis; L-lysine biosynthesis via DAP pathway; LL-2,6-diaminopimelate from (S)-tetrahydrodipicolinate (succinylase route): step 3/3. Functionally, catalyzes the hydrolysis of N-succinyl-L,L-diaminopimelic acid (SDAP), forming succinate and LL-2,6-diaminopimelate (DAP), an intermediate involved in the bacterial biosynthesis of lysine and meso-diaminopimelic acid, an essential component of bacterial cell walls. The sequence is that of Succinyl-diaminopimelate desuccinylase from Campylobacter jejuni subsp. jejuni serotype O:2 (strain ATCC 700819 / NCTC 11168).